Reading from the N-terminus, the 239-residue chain is Leucyl/phenylalanyl-tRNA--protein transferase (239 aa).

The protein belongs to the L/F-transferase family.

Its subcellular location is the cytoplasm. It carries out the reaction N-terminal L-lysyl-[protein] + L-leucyl-tRNA(Leu) = N-terminal L-leucyl-L-lysyl-[protein] + tRNA(Leu) + H(+). The enzyme catalyses N-terminal L-arginyl-[protein] + L-leucyl-tRNA(Leu) = N-terminal L-leucyl-L-arginyl-[protein] + tRNA(Leu) + H(+). The catalysed reaction is L-phenylalanyl-tRNA(Phe) + an N-terminal L-alpha-aminoacyl-[protein] = an N-terminal L-phenylalanyl-L-alpha-aminoacyl-[protein] + tRNA(Phe). In terms of biological role, functions in the N-end rule pathway of protein degradation where it conjugates Leu, Phe and, less efficiently, Met from aminoacyl-tRNAs to the N-termini of proteins containing an N-terminal arginine or lysine. This Syntrophus aciditrophicus (strain SB) protein is Leucyl/phenylalanyl-tRNA--protein transferase.